The chain runs to 490 residues: MYENSCSYQTALDLKRVSPPTLAQVKTEECLALGQCSPEWTSYRFHQSTFEQLKQSVEKAKAALQDRSSFFGASSAFSDIYSSQRLTDSLDTLPVQSGNGGGNCLGLPHNPNVGVGVAGVLNYNAVSSSTAGVLSSSGNGVQRHRLDTLQPPSGCSPAVTQHGVITSSAGQVTSGTLDAVSAAPALPSLTASSSSHVEHKVRADKSTLDCATTSSHAAAPSSSSSASDHQQGRISGSKSSNTSGTGGGASASGGGGSALYSSYKSSWGSHSSTQSQGYSSNALGIKHDPHSQLRQPDPYQMFGPTSSRLASSGSGQIQLWQFLLELLSDSNNASCITWEGTNGEFKLTDPDEVARRWGERKSKPNMNYDKLSRALRYYYDKNIMTKVHGKRYAYKFDFQGLAAATQPAASDPTYKYQSDLFMTPYHHSAKLSSFMSPHHGMTSSSASIFPSAASWGNWGSPATNLYQPHSMSHVTPSHVAPHLSSYPHYA.

Disordered regions lie at residues 190–255 (TASS…SGGG) and 271–294 (SSTQ…SQLR). The span at 196–207 (HVEHKVRADKST) shows a compositional bias: basic and acidic residues. The segment covering 211–227 (ATTSSHAAAPSSSSSAS) has biased composition (low complexity). Residues 244 to 255 (GTGGGASASGGG) are compositionally biased toward gly residues. A compositionally biased stretch (low complexity) spans 271–280 (SSTQSQGYSS). A DNA-binding region (ETS) is located at residues 317–397 (IQLWQFLLEL…HGKRYAYKFD (81 aa)).

This sequence belongs to the ETS family. In terms of tissue distribution, embryonic ventral nervous system, higher in the thoracic than abdominal segments.

It is found in the nucleus. This chain is DNA-binding protein D-ETS-3 (Ets65A), found in Drosophila melanogaster (Fruit fly).